Here is a 231-residue protein sequence, read N- to C-terminus: Ribose-5-phosphate isomerase A (231 aa).

Residues 28–31 (TGST), 83–86 (DGAD), and 96–99 (KGGG) contribute to the substrate site. Glu105 acts as the Proton acceptor in catalysis. Position 123 (Lys123) interacts with substrate.

It belongs to the ribose 5-phosphate isomerase family. Homodimer.

The catalysed reaction is aldehydo-D-ribose 5-phosphate = D-ribulose 5-phosphate. Its pathway is carbohydrate degradation; pentose phosphate pathway; D-ribose 5-phosphate from D-ribulose 5-phosphate (non-oxidative stage): step 1/1. Its function is as follows. Catalyzes the reversible conversion of ribose-5-phosphate to ribulose 5-phosphate. This is Ribose-5-phosphate isomerase A from Agrobacterium fabrum (strain C58 / ATCC 33970) (Agrobacterium tumefaciens (strain C58)).